The chain runs to 296 residues: ATP synthase gamma chain (296 aa).

This sequence belongs to the ATPase gamma chain family. In terms of assembly, F-type ATPases have 2 components, CF(1) - the catalytic core - and CF(0) - the membrane proton channel. CF(1) has five subunits: alpha(3), beta(3), gamma(1), delta(1), epsilon(1). CF(0) has three main subunits: a, b and c.

It is found in the cell inner membrane. Its function is as follows. Produces ATP from ADP in the presence of a proton gradient across the membrane. The gamma chain is believed to be important in regulating ATPase activity and the flow of protons through the CF(0) complex. The chain is ATP synthase gamma chain from Methylorubrum extorquens (strain CM4 / NCIMB 13688) (Methylobacterium extorquens).